Reading from the N-terminus, the 163-residue chain is NADH-quinone oxidoreductase subunit I (163 aa).

2 4Fe-4S ferredoxin-type domains span residues 53 to 83 (LRRY…IEAG) and 94 to 123 (TLYE…ETRE). Residues C63, C66, C69, C73, C103, C106, C109, and C113 each coordinate [4Fe-4S] cluster.

This sequence belongs to the complex I 23 kDa subunit family. As to quaternary structure, NDH-1 is composed of 14 different subunits. Subunits NuoA, H, J, K, L, M, N constitute the membrane sector of the complex. [4Fe-4S] cluster is required as a cofactor.

It localises to the cell inner membrane. It catalyses the reaction a quinone + NADH + 5 H(+)(in) = a quinol + NAD(+) + 4 H(+)(out). In terms of biological role, NDH-1 shuttles electrons from NADH, via FMN and iron-sulfur (Fe-S) centers, to quinones in the respiratory chain. The immediate electron acceptor for the enzyme in this species is believed to be ubiquinone. Couples the redox reaction to proton translocation (for every two electrons transferred, four hydrogen ions are translocated across the cytoplasmic membrane), and thus conserves the redox energy in a proton gradient. The chain is NADH-quinone oxidoreductase subunit I from Alkalilimnicola ehrlichii (strain ATCC BAA-1101 / DSM 17681 / MLHE-1).